The following is a 68-amino-acid chain: Negative regulatory protein YxlD (68 aa).

2 helical membrane-spanning segments follow: residues 5-25 and 37-57; these read EIII…FLFI and WGIV…FFVI.

The protein localises to the cell membrane. Its function is as follows. Together with YxlE, is important for negative regulation of sigma Y activity, being the major negative regulator. The chain is Negative regulatory protein YxlD (yxlD) from Bacillus subtilis (strain 168).